The following is a 2541-amino-acid chain: Talin-1 (2541 aa).

One can recognise an FERM domain in the interval 86-403 (RPLKIRMLDG…GYIDIILKKK (318 aa)). The residue at position 167 (threonine 167) is a Phosphothreonine. Positions 280–435 (FQAHKNCGQM…PKKSTVLQQQ (156 aa)) are interaction with LAYN. 5 positions are modified to phosphoserine: serine 405, serine 425, serine 446, serine 620, and serine 729. Residues 482–655 (RGHMPPLTSA…QASGELLQQI (174 aa)) form a helical bundle R1 region. The tract at residues 656–786 (GESDTDPHFQ…ALNELLQHVK (131 aa)) is helical bundle R2. The tract at residues 787 to 911 (AHATGAGPAG…NAAAQNAIKK (125 aa)) is helical bundle R3. Positions 913–1044 (LVQRLEHAAK…RTAAQKAQEA (132 aa)) are helical bundle R4. Serine 1021 carries the post-translational modification Phosphoserine. The interval 1046–1206 (GPLEMDSALS…NRCVSCLPGQ (161 aa)) is helical bundle R5. A Phosphotyrosine modification is found at tyrosine 1116. The residue at position 1142 (threonine 1142) is a Phosphothreonine. A phosphoserine mark is found at serine 1201 and serine 1225. Residues 1207–1357 (RDVDNALRAV…QLITMCTQQA (151 aa)) form a helical bundle R6 region. Threonine 1263 is subject to Phosphothreonine. Serine 1323 carries the phosphoserine modification. The interaction with SYNM stretch occupies residues 1327-1948 (AAPNLKSQLA…CSPSDAYTKK (622 aa)). The segment at 1358–1453 (PGQKECDNAL…AYLVGVSDPN (96 aa)) is helical bundle R7A. Residues 1359-1659 (GQKECDNALR…SMRDKAPGQL (301 aa)) are interaction with VCL and F-actin. The segment at 1461–1580 (LVEPTQFARA…NLSAFASNPE (120 aa)) is helical bundle R8. N6-acetyllysine is present on lysine 1544. Residues 1581–1653 (FSSIPAQISP…IKKLITSMRD (73 aa)) form a helical bundle R7B region. A helical bundle R9 region spans residues 1655–1822 (APGQLECETA…TLNEAASAAG (168 aa)). A helical bundle R10 region spans residues 1823–1973 (VVGGMVDSIT…VLAALQAGNR (151 aa)). At serine 1849 the chain carries Phosphoserine. The residue at position 1855 (threonine 1855) is a Phosphothreonine. Serine 1878 is subject to Phosphoserine. Residues 1974–2140 (GTQACITAAS…TVKAVEDEAT (167 aa)) are helical bundle R11. Lysine 2031 carries the N6-acetyllysine modification. Serine 2040 carries the post-translational modification Phosphoserine. Lysine 2115 is modified (N6-acetyllysine). Residues 2141–2294 (KGTRALEATT…QAAEAMKGTE (154 aa)) are helical bundle R12. One can recognise an I/LWEQ domain in the interval 2293-2533 (TEWVDPEDPT…QIRQQQYKFL (241 aa)). Residues 2300 to 2482 (DPTVIAENEL…AAQKAAAFEE (183 aa)) are helical bundle R13.

In terms of assembly, part of a complex composed of THSD1, PTK2/FAK1, TLN1 and VCL. Interacts with THSD1; this promotes interaction with PTK2/FAK1 and VCL. Binds with high affinity to VCL and with low affinity to integrins. Interacts with APBB1IP; this inhibits VCL binding. Interacts with PTK2/FAK1. Interacts with PIP5K1C and NRAP. Interacts with LAYN. Interacts with SYNM. Interacts with ITGB1; the interaction is prevented by competitive binding of ITGB1BP1. Interacts with SVEP1. Interacts (via R7 domain) with KANK1 or KANK2 (via KN motif); this interaction likely initiates the assembly of cortical microtubule stabilization complexes (CMSCs) at the vicinity of focal adhesions. Interacts with VCL; shows reduced VCL binding compared to isoform 2. Interacts with APBB1IP; shows similar level of binding compared to isoform 2. As to quaternary structure, interacts with VCL; shows enhanced VCL binding compared to isoform 1. Interacts with APBB1IP; shows similar level of binding compared to isoform 1. In terms of assembly, (Microbial infection) Interacts with human cytomegalovirus protein UL135. In terms of tissue distribution, expressed at low to non-detectable levels in many tissues but highly expressed in skin and pancreas with other tissues including kidney cortex, endocervix, testis, pituitary, liver, and spleen also showing robust expression.

Its subcellular location is the cell projection. It is found in the ruffle membrane. The protein localises to the cytoplasm. The protein resides in the cytoskeleton. It localises to the cell surface. Its subcellular location is the cell junction. It is found in the focal adhesion. In terms of biological role, high molecular weight cytoskeletal protein concentrated at regions of cell-matrix and cell-cell contacts. Involved in connections of major cytoskeletal structures to the plasma membrane. With KANK1 co-organize the assembly of cortical microtubule stabilizing complexes (CMSCs) positioned to control microtubule-actin crosstalk at focal adhesions (FAs) rims. The protein is Talin-1 (TLN1) of Homo sapiens (Human).